The primary structure comprises 113 residues: Head virion protein G6P (113 aa).

3 helical membrane-spanning segments follow: residues 13–33, 36–56, and 69–89; these read FIGWLAGALIAYVAKFFTLGI, IALAISLFLGLIIGLNGLLVS, and IASAVSYVVPANAAPCLYAIF.

This sequence belongs to the inovirus G6P protein family. As to quaternary structure, interacts with G3P; this interaction is required for proper integration of G3P and G6P into the virion.

The protein localises to the virion. It is found in the host membrane. Plays essential roles both in the entry of the viral genome into the bacterial host and in budding process. The formation of the G3P-G6P complex termed adsorption complex is essential for correct termination of filamentous phage assembly. In Escherichia phage If1 (Bacteriophage If1), this protein is Head virion protein G6P (VI).